A 218-amino-acid polypeptide reads, in one-letter code: N-(5'-phosphoribosyl)anthranilate isomerase (218 aa).

It belongs to the TrpF family.

It carries out the reaction N-(5-phospho-beta-D-ribosyl)anthranilate = 1-(2-carboxyphenylamino)-1-deoxy-D-ribulose 5-phosphate. Its pathway is amino-acid biosynthesis; L-tryptophan biosynthesis; L-tryptophan from chorismate: step 3/5. The polypeptide is N-(5'-phosphoribosyl)anthranilate isomerase (Stenotrophomonas maltophilia (strain K279a)).